We begin with the raw amino-acid sequence, 414 residues long: MAVNRRVPRVRDLAPLLQFNRPQFDTSKRRLGAALTIQDLRRIAKRRTPRAAFDYADGGAEDELSIARARQGFRDIEFHPTILRDVTTVCAGWNVLGQPTVLPFGIAPTGFTRLMHTEGEIAGARAAAAAGIPFSLSTLATCAIEDLVIAVPQGRKWFQLYMWRDRDRSMALVRRVAAAGFDTMLVTVDVPVAGARLRDVRNGMSIPPALTLRTVLDAMGHPRWWFDLLTTEPLAFASLDRWPGTVGEYLNTVFDPSLTFDDLAWIKSQWPGKLVVKGIQTLDDARAVVDRGVDGIVLSNHGGRQLDRAPVPFHLLPHVARELGKHTEILVDTGIMSGADIVAAIALGARCTLIGRAYLYGLMAGGEAGVNRAIEILQTGVIRTMRLLGVTCLEELSPRHVTQLRRLGPIGAPT.

Residues arginine 29–arginine 406 form the FMN hydroxy acid dehydrogenase domain. Tyrosine 55 is an a 2-oxocarboxylate binding site. Residues serine 137 and glutamine 159 each coordinate FMN. Tyrosine 161 is an a 2-oxocarboxylate binding site. Threonine 187 provides a ligand contact to FMN. Arginine 196 contacts a 2-oxocarboxylate. Position 277 (lysine 277) interacts with FMN. Histidine 301 serves as the catalytic Proton acceptor. Position 304 (arginine 304) interacts with a 2-oxocarboxylate. Residues aspartate 332–methionine 336 and glycine 355–arginine 356 each bind FMN.

Belongs to the FMN-dependent alpha-hydroxy acid dehydrogenase family. Requires FMN as cofactor.

The catalysed reaction is (S)-lactate + A = pyruvate + AH2. This chain is Putative L-lactate dehydrogenase (lldD), found in Mycobacterium tuberculosis (strain ATCC 25618 / H37Rv).